The chain runs to 502 residues: MSDHEQAQAQSQDENQIMAERRQKLQAIREKGIAYPNDFKRSHFAKPLQDDHAAKEAEALEAEKIEVAVAGRMMLKRVMGKASFATLQDVSGRIQAFISRDNVGEDVYADFKRWDLGDIVAVKGMLFKTKTGELTVQATEVRMLSKNIRPLPEKFHGIADQETKYRQRYADLIMSEESRETFIKRSKIVQKVRDVMVGEGYLEVETPMMHPIPGGASAKPFVTHHNALDMPLYLRIAPELYLKRLVVGGLERVFEINRNFRNEGMSTRHNPEFTMIEFYEAYSDYQRMMEMTETIIRECALVACGSTTVTYQGKEVDLGKPFDRFTIVQAIKHYNPQYTDAQLSDAAWVASEIKRLGGKLPPAPGLGSLQLALFEECAESLLWNPTFIIDYPVEVSPLARGSDTQPGLTERFELFIVGREHANGYSELNDPEDQAARFQAQVAQKDAGDDEAMHYDADYIRAMEYGLPPTGGCGIGIDRLVMLLTDAPSIRDVILFPHMRPE.

The interval 1 to 22 is disordered; sequence MSDHEQAQAQSQDENQIMAERR. Mg(2+) contacts are provided by glutamate 413 and glutamate 420.

Belongs to the class-II aminoacyl-tRNA synthetase family. Homodimer. Requires Mg(2+) as cofactor.

Its subcellular location is the cytoplasm. It catalyses the reaction tRNA(Lys) + L-lysine + ATP = L-lysyl-tRNA(Lys) + AMP + diphosphate. In Chromobacterium violaceum (strain ATCC 12472 / DSM 30191 / JCM 1249 / CCUG 213 / NBRC 12614 / NCIMB 9131 / NCTC 9757 / MK), this protein is Lysine--tRNA ligase.